Reading from the N-terminus, the 392-residue chain is Homoserine O-acetyltransferase (392 aa).

Positions 52-356 (NVVVVLHALT…ICGHDGFLVE (305 aa)) constitute an AB hydrolase-1 domain. S157 serves as the catalytic Nucleophile. R227 lines the substrate pocket. Residues D320 and H350 contribute to the active site. D351 contributes to the substrate binding site. The segment at 373-392 (SQSAGPGGAGPGSRKGTTRR) is disordered.

Belongs to the AB hydrolase superfamily. MetX family. In terms of assembly, homodimer.

It localises to the cytoplasm. The enzyme catalyses L-homoserine + acetyl-CoA = O-acetyl-L-homoserine + CoA. The protein operates within amino-acid biosynthesis; L-methionine biosynthesis via de novo pathway; O-acetyl-L-homoserine from L-homoserine: step 1/1. Its function is as follows. Transfers an acetyl group from acetyl-CoA to L-homoserine, forming acetyl-L-homoserine. In Mycolicibacterium paratuberculosis (strain ATCC BAA-968 / K-10) (Mycobacterium paratuberculosis), this protein is Homoserine O-acetyltransferase.